The chain runs to 435 residues: Membrane-bound ghrelin O-acyltransferase MBOAT4 (435 aa).

The Lumenal segment spans residues 1 to 5 (MDWLQ). Residues 6–26 (FFFLHPVSLYQGAAFPFALLF) traverse the membrane as a helical segment. Residues 27-40 (NYLCITESFPTRAR) are Cytoplasmic-facing. A helical transmembrane segment spans residues 41-56 (YLFLLAGGGVLALAAM). The Lumenal segment spans residues 57–59 (GPY). The helical transmembrane segment at 60–76 (ALLIFIPALCAVAMISS) threads the bilayer. At 77 to 82 (LSPQEV) the chain is on the cytoplasmic side. A helical membrane pass occupies residues 83–101 (HGLTFFFQMGWQTLCHLGL). Residues 102-120 (HYKEYYLCEPPPVRFYITL) are Lumenal-facing. The helical transmembrane segment at 121–136 (SSLMLLTQRVTSLSLD) threads the bilayer. The Cytoplasmic portion of the chain corresponds to 137 to 206 (ISEGKVEAAW…YPSISFWALT (70 aa)). The chain crosses the membrane as a helical span at residues 207-227 (WRGLQILGLECLKVALRRVVS). The Lumenal portion of the chain corresponds to 228–240 (AGAGLDDCQRLEC). Residues 241–261 (IYIMWSTAGLFKLTYYSHWIL) form a helical membrane-spanning segment. Residues 262–324 (DDSLLHAAGF…KRLVFQRSRR (63 aa)) lie on the Cytoplasmic side of the membrane. Active-site residues include N307 and H338. The chain crosses the membrane as a helical span at residues 325-338 (WPVLQTFAFSAWWH). Topologically, residues 339-340 (GL) are lumenal. The chain crosses the membrane as a helical span at residues 341–357 (HPGQVFGFLCWSVMVKA). The Cytoplasmic portion of the chain corresponds to 358 to 376 (DYLIHTFANGCIRSWPLRL). Residues 377–397 (LYRSLTWAHTQIIIAYVMLAV) traverse the membrane as a helical segment. Residues 398 to 407 (EGRSFSSLCR) lie on the Lumenal side of the membrane. Residues 408–428 (LCCSYNSIFPVTYCLLLFLLA) traverse the membrane as a helical segment. Residues 429–435 (RRKHKCN) lie on the Cytoplasmic side of the membrane.

Belongs to the membrane-bound acyltransferase family. As to quaternary structure, monomer. Post-translationally, not glycosylated.

It is found in the endoplasmic reticulum membrane. It carries out the reaction octanoyl-CoA + L-seryl-[protein] = O-octanoyl-L-seryl-[protein] + CoA. It catalyses the reaction decanoyl-CoA + L-seryl-[protein] = O-decanoyl-L-seryl-[protein] + CoA. The catalysed reaction is L-seryl-[protein] + acetyl-CoA = O-acetyl-L-seryl-[protein] + CoA. The enzyme catalyses L-seryl-[protein] + butanoyl-CoA = O-butanoyl-L-seryl-[protein] + CoA. It carries out the reaction pentanoyl-CoA + L-seryl-[protein] = O-pentanoyl-L-seryl-[protein] + CoA. It catalyses the reaction hexanoyl-CoA + L-seryl-[protein] = O-hexanoyl-L-seryl-[protein] + CoA. The catalysed reaction is heptanoyl-CoA + L-seryl-[protein] = O-heptanoyl-L-seryl-[protein] + CoA. The enzyme catalyses nonanoyl-CoA + L-seryl-[protein] = O-nonanoyl-L-seryl-[protein] + CoA. It carries out the reaction L-seryl-[protein] + dodecanoyl-CoA = O-dodecanoyl-L-seryl-[protein] + CoA. It catalyses the reaction L-seryl-[protein] + tetradecanoyl-CoA = O-tetradecanoyl-L-seryl-[protein] + CoA. The catalysed reaction is a fatty acyl-CoA + L-seryl-[protein] = O-fatty acyl-L-seryl-[protein] + CoA. Catalyzes ghrelin acylation at 'Ser-3' using preferentially octanoyl-CoA, hexanoyl-CoA and decanoyl-CoA as acyl-CoA donors leading to ghrelin activity. In vitro uses also acyl-CoA donors of different lengths from short-chain (C2) to long-chain fatty acids (C16) knowing that acyl-CoA donors from butanoyl-CoA (C4) to dodecanoyl-CoA (C12) are more efficient compared to longer acyl-CoA donors, such as myristoyl-CoA (C14) and palmitoyl-CoA (C16) that are not efficient. The polypeptide is Membrane-bound ghrelin O-acyltransferase MBOAT4 (Rattus norvegicus (Rat)).